Consider the following 221-residue polypeptide: Ependymin-1 (221 aa).

A signal peptide spans 1–21 (MQAFAVAALSIWLCLGATTLA). Asn33, Asn73, and Asn97 each carry an N-linked (GlcNAc...) asparagine glycan.

It belongs to the ependymin family. In terms of processing, binds calcium through the terminal sialic acids. EPDs are synthesized in the meninx and secreted in the cerebrospinal fluid.

The protein resides in the secreted. Its function is as follows. May play a role in neural plasticity. May be involved during axon regeneration. The chain is Ependymin-1 (epd1) from Oncorhynchus mykiss (Rainbow trout).